Consider the following 444-residue polypeptide: Sonic hedgehog protein (444 aa).

Positions 1–24 (MLVATQSLLLLSFICTLVTPPGLA) are cleaved as a signal peptide. Residue cysteine 25 is the site of N-palmitoyl cysteine attachment. The short motif at 33–39 (KRRHPKK) is the Cardin-Weintraub element. Ca(2+)-binding residues include glutamate 90, glutamate 91, aspartate 96, threonine 126, glutamate 127, aspartate 130, and aspartate 132. 3 residues coordinate Zn(2+): histidine 141, aspartate 148, and histidine 183. Residue glycine 198 is the site of Cholesterol glycine ester attachment. Tandem repeats lie at residues 386–393 (QVDLQSHH), 394–401 (QVDLQSHH), and 403–409 (VDLQSHH). A 3 X 8 AA tandem repeats of Q-V-D-L-Q-S-H-H region spans residues 386–409 (QVDLQSHHQVDLQSHHQVDLQSHH).

Belongs to the hedgehog family. As to quaternary structure, interacts with HHATL/GUP1 which negatively regulates HHAT-mediated palmitoylation of the SHH N-terminus. Interacts with BOC and CDON. Interacts with HHIP. Interacts with DISP1 via its cholesterol anchor. Interacts with SCUBE2. Multimer. In terms of processing, the C-terminal domain displays an autoproteolysis activity and a cholesterol transferase activity. Both activities result in the cleavage of the full-length protein and covalent attachment of a cholesterol moiety to the C-terminal of the newly generated N-terminal fragment (ShhN). Cholesterylation is required for the sonic hedgehog protein N-product targeting to lipid rafts and multimerization. ShhN is the active species in both local and long-range signaling, whereas the C-product (ShhC) is degraded in the reticulum endoplasmic. N-palmitoylation by HHAT of ShhN is required for sonic hedgehog protein N-product multimerization and full activity. It is a prerequisite for the membrane-proximal positioning and the subsequent shedding of this N-terminal peptide. Post-translationally, the lipidated N- and C-terminal peptides of ShhNp can be cleaved (shedding). The N-terminal palmitoylated peptide is cleaved at the Cardin-Weintraub (CW) motif site. The cleavage reduced the interactions with heparan sulfate. The cleavage is enhanced by SCUBE2. In terms of tissue distribution, strongly expressed in notochord and neural floor plate during embryogenesis. In tadpole, high expression is observed in pancreas/stomach, moderate expression in tail, and low expression in intestine, brain, and hind limb.

The protein localises to the endoplasmic reticulum membrane. It localises to the golgi apparatus membrane. It is found in the cell membrane. The catalysed reaction is glycyl-L-cysteinyl-[protein] + cholesterol + H(+) = [protein]-C-terminal glycyl cholesterol ester + N-terminal L-cysteinyl-[protein]. Its function is as follows. The C-terminal part of the sonic hedgehog protein precursor displays an autoproteolysis and a cholesterol transferase activity. Both activities result in the cleavage of the full-length protein into two parts (ShhN and ShhC) followed by the covalent attachment of a cholesterol moiety to the C-terminal of the newly generated ShhN. Both activities occur in the endoplasmic reticulum. Once cleaved, ShhC is degraded in the endoplasmic reticulum. In terms of biological role, the dually lipidated sonic hedgehog protein N-product (ShhNp) is a morphogen which is essential for a variety of patterning events during development. Induces ventral cell fate in the neural tube and somites. Involved in the patterning of the anterior-posterior axis of the developing limb bud. Essential for axon guidance. Binds to the patched (PTCH1) receptor, which functions in association with smoothened (SMO), to activate the transcription of target genes. In the absence of SHH, PTCH1 represses the constitutive signaling activity of SMO. This chain is Sonic hedgehog protein, found in Xenopus laevis (African clawed frog).